A 330-amino-acid polypeptide reads, in one-letter code: Succinylglutamate desuccinylase (330 aa).

Histidine 53, glutamate 56, and histidine 147 together coordinate Zn(2+). The active site involves glutamate 210.

It belongs to the AspA/AstE family. Succinylglutamate desuccinylase subfamily. Zn(2+) is required as a cofactor.

It catalyses the reaction N-succinyl-L-glutamate + H2O = L-glutamate + succinate. Its pathway is amino-acid degradation; L-arginine degradation via AST pathway; L-glutamate and succinate from L-arginine: step 5/5. Functionally, transforms N(2)-succinylglutamate into succinate and glutamate. The chain is Succinylglutamate desuccinylase from Yersinia pseudotuberculosis serotype O:3 (strain YPIII).